We begin with the raw amino-acid sequence, 376 residues long: UPF0754 membrane protein BLi01057/BL02871 (376 aa).

2 helical membrane-spanning segments follow: residues 1–21 (MYVF…GAVT) and 356–376 (YLGG…VILI).

This sequence belongs to the UPF0754 family.

The protein resides in the cell membrane. The protein is UPF0754 membrane protein BLi01057/BL02871 of Bacillus licheniformis (strain ATCC 14580 / DSM 13 / JCM 2505 / CCUG 7422 / NBRC 12200 / NCIMB 9375 / NCTC 10341 / NRRL NRS-1264 / Gibson 46).